Consider the following 354-residue polypeptide: MDDNKKKALAAALGQIERQFGKGAVMRMGDHDRQAIPAISTGSLGLDIALGIGGLPKGRIVEIYGPESSGKTTLTLSVIAQAQKMGATCAFVDAEHALDPEYAGKLGVNVDDLLVSQPDTGEQALEITDMLVRSNAIDVIVVDSVAALVPKAEIEGEMGDMHVGLQARLMSQALRKITGNIKNANCLVIFINQIRMKIGVMFGSPETTTGGNALKFYASVRLDIRRTGAVKEGDEVVGSETRVKVVKNKVAPPFRQAEFQILYGKGIYLNGEIVDLAVLHGFVEKSGAWYSYQGSKIGQGKANSAKFLADNPEICKALEKQIRDKLLTPGVDTKAVGSREAVAADDMSEADVDI.

Gly-65–Thr-72 is a binding site for ATP.

Belongs to the RecA family.

The protein resides in the cytoplasm. Functionally, can catalyze the hydrolysis of ATP in the presence of single-stranded DNA, the ATP-dependent uptake of single-stranded DNA by duplex DNA, and the ATP-dependent hybridization of homologous single-stranded DNAs. It interacts with LexA causing its activation and leading to its autocatalytic cleavage. In Pseudomonas syringae pv. syringae (strain B728a), this protein is Protein RecA.